The primary structure comprises 157 residues: Ribosomal RNA large subunit methyltransferase H (157 aa).

S-adenosyl-L-methionine-binding positions include L73, G105, and 124 to 129; that span reads LSKMTF.

The protein belongs to the RNA methyltransferase RlmH family. In terms of assembly, homodimer.

The protein localises to the cytoplasm. It catalyses the reaction pseudouridine(1915) in 23S rRNA + S-adenosyl-L-methionine = N(3)-methylpseudouridine(1915) in 23S rRNA + S-adenosyl-L-homocysteine + H(+). Specifically methylates the pseudouridine at position 1915 (m3Psi1915) in 23S rRNA. The sequence is that of Ribosomal RNA large subunit methyltransferase H from Parabacteroides distasonis (strain ATCC 8503 / DSM 20701 / CIP 104284 / JCM 5825 / NCTC 11152).